Here is a 547-residue protein sequence, read N- to C-terminus: Signal recognition particle receptor subunit alpha homolog (547 aa).

Residues 124-174 (LENETDTKSLPVEANNDNSARKKNEYEMKKKGAQSKQTNAPKKGKKQLRKW) are disordered. Basic and acidic residues predominate over residues 142–153 (SARKKNEYEMKK). Positions 343–546 (YTISLIGVNG…SVDWVVDQLM (204 aa)) are NG domain. GTP contacts are provided by residues 349-356 (GVNGVGKS), 437-441 (DTAGR), and 498-501 (SKVD).

It belongs to the GTP-binding SRP family. As to quaternary structure, heterodimer of an alpha and a beta chain.

Its subcellular location is the endoplasmic reticulum membrane. In terms of biological role, component of the SRP (signal recognition particle) receptor (SR). Ensures, in conjunction with the signal recognition particle, the correct targeting of the nascent secretory proteins to the endoplasmic reticulum membrane system. GTP hydrolysis may enhance the fidelity of and provide unidirectionality to the targeting reaction. The sequence is that of Signal recognition particle receptor subunit alpha homolog (srp101) from Schizosaccharomyces pombe (strain 972 / ATCC 24843) (Fission yeast).